A 302-amino-acid chain; its full sequence is Homoserine kinase (302 aa).

92–102 serves as a coordination point for ATP; the sequence is PLARGLGSSAT.

Belongs to the GHMP kinase family. Homoserine kinase subfamily.

The protein resides in the cytoplasm. It carries out the reaction L-homoserine + ATP = O-phospho-L-homoserine + ADP + H(+). It functions in the pathway amino-acid biosynthesis; L-threonine biosynthesis; L-threonine from L-aspartate: step 4/5. Catalyzes the ATP-dependent phosphorylation of L-homoserine to L-homoserine phosphate. This is Homoserine kinase from Trichormus variabilis (strain ATCC 29413 / PCC 7937) (Anabaena variabilis).